The primary structure comprises 466 residues: Argininosuccinate lyase 1 (466 aa).

The protein belongs to the lyase 1 family. Argininosuccinate lyase subfamily.

It localises to the cytoplasm. It carries out the reaction 2-(N(omega)-L-arginino)succinate = fumarate + L-arginine. It functions in the pathway amino-acid biosynthesis; L-arginine biosynthesis; L-arginine from L-ornithine and carbamoyl phosphate: step 3/3. This is Argininosuccinate lyase 1 from Mesorhizobium japonicum (strain LMG 29417 / CECT 9101 / MAFF 303099) (Mesorhizobium loti (strain MAFF 303099)).